The chain runs to 310 residues: tRNA-cytidine(32) 2-sulfurtransferase (310 aa).

Residues 45–50 (SGGKDS) carry the PP-loop motif motif. [4Fe-4S] cluster is bound by residues Cys120, Cys123, and Cys211.

This sequence belongs to the TtcA family. Homodimer. The cofactor is Mg(2+). It depends on [4Fe-4S] cluster as a cofactor.

Its subcellular location is the cytoplasm. The enzyme catalyses cytidine(32) in tRNA + S-sulfanyl-L-cysteinyl-[cysteine desulfurase] + AH2 + ATP = 2-thiocytidine(32) in tRNA + L-cysteinyl-[cysteine desulfurase] + A + AMP + diphosphate + H(+). It functions in the pathway tRNA modification. Functionally, catalyzes the ATP-dependent 2-thiolation of cytidine in position 32 of tRNA, to form 2-thiocytidine (s(2)C32). The sulfur atoms are provided by the cysteine/cysteine desulfurase (IscS) system. This chain is tRNA-cytidine(32) 2-sulfurtransferase, found in Shewanella baltica (strain OS185).